We begin with the raw amino-acid sequence, 112 residues long: Nucleoid-associated protein RER_03900 (112 aa).

This sequence belongs to the YbaB/EbfC family. As to quaternary structure, homodimer.

The protein resides in the cytoplasm. Its subcellular location is the nucleoid. Binds to DNA and alters its conformation. May be involved in regulation of gene expression, nucleoid organization and DNA protection. This is Nucleoid-associated protein RER_03900 from Rhodococcus erythropolis (strain PR4 / NBRC 100887).